Here is a 246-residue protein sequence, read N- to C-terminus: Probable transcriptional regulatory protein APP7_1210 (246 aa).

The protein belongs to the TACO1 family.

It is found in the cytoplasm. The polypeptide is Probable transcriptional regulatory protein APP7_1210 (Actinobacillus pleuropneumoniae serotype 7 (strain AP76)).